Reading from the N-terminus, the 130-residue chain is ESAT-6 secretion system extracellular protein C (130 aa).

The protein belongs to the EsxC family.

It is found in the secreted. The protein is ESAT-6 secretion system extracellular protein C of Staphylococcus aureus (strain MSSA476).